Consider the following 40-residue polypeptide: Large ribosomal subunit protein bL36 (40 aa).

It belongs to the bacterial ribosomal protein bL36 family.

This chain is Large ribosomal subunit protein bL36, found in Corynebacterium glutamicum (strain R).